A 244-amino-acid chain; its full sequence is Haloacid dehalogenase-like hydrolase domain-containing protein 3 (244 aa).

Belongs to the HAD-like hydrolase superfamily.

In Xenopus laevis (African clawed frog), this protein is Haloacid dehalogenase-like hydrolase domain-containing protein 3 (hdhd3).